The primary structure comprises 151 residues: UPF0178 protein CPS_3584 (151 aa).

Belongs to the UPF0178 family.

This chain is UPF0178 protein CPS_3584, found in Colwellia psychrerythraea (strain 34H / ATCC BAA-681) (Vibrio psychroerythus).